The chain runs to 98 residues: NADH-ubiquinone oxidoreductase chain 4L (98 aa).

A run of 3 helical transmembrane segments spans residues 1 to 21 (MTLIHMNILMAFSMSLVGLLM), 29 to 49 (ALLCLEGMMLSLFVLATLTIL), and 61 to 81 (IILLVFAACEAAIGLALLVMV).

Belongs to the complex I subunit 4L family. Core subunit of respiratory chain NADH dehydrogenase (Complex I) which is composed of 45 different subunits.

Its subcellular location is the mitochondrion inner membrane. The catalysed reaction is a ubiquinone + NADH + 5 H(+)(in) = a ubiquinol + NAD(+) + 4 H(+)(out). Its function is as follows. Core subunit of the mitochondrial membrane respiratory chain NADH dehydrogenase (Complex I) which catalyzes electron transfer from NADH through the respiratory chain, using ubiquinone as an electron acceptor. Part of the enzyme membrane arm which is embedded in the lipid bilayer and involved in proton translocation. The chain is NADH-ubiquinone oxidoreductase chain 4L (MT-ND4L) from Balaenoptera bonaerensis (Antarctic minke whale).